The chain runs to 445 residues: Fatty acid desaturase 3 (445 aa).

Residues 1 to 21 are disordered; sequence MGGVGEPGPREGPAQPGAPLP. The Cytoplasmic portion of the chain corresponds to 1–133; sequence MGGVGEPGPR…DMKLFDASPT (133 aa). In terms of domain architecture, Cytochrome b5 heme-binding spans 20-97; that stretch reads LPTFCWEQIR…LQPLLIGELA (78 aa). Residues 134-154 form a helical membrane-spanning segment; it reads FFAFLLGHILAMEVLAWLLIY. The Lumenal portion of the chain corresponds to 155–159; the sequence is LLGPG. A helical membrane pass occupies residues 160-180; it reads WVPSALAAFILAISQAQSWCL. Residues 181–263 are Cytoplasmic-facing; the sequence is QHDLGHASIF…KRRYLPYNQQ (83 aa). Positions 182 to 186 match the Histidine box-1 motif; it reads HDLGH. Residues 219–223 carry the Histidine box-2 motif; sequence HFQHH. The helical transmembrane segment at 264–284 threads the bilayer; sequence HLYFFLIGPPLLTLVNFEVEN. At 285-306 the chain is on the lumenal side; sequence LAYMLVCMQWADLLWAASFYAR. The helical transmembrane segment at 307–327 threads the bilayer; the sequence is FFLSYLPFYGVPGVLLFFVAV. At 328-445 the chain is on the cytoplasmic side; the sequence is RVLESHWFVW…DIWLDAYLHQ (118 aa). A Histidine box-3 motif is present at residues 383–387; that stretch reads QIEHH.

Belongs to the fatty acid desaturase type 1 family. In terms of tissue distribution, highly expressed in various organs and tissues including liver, kidney, brain, lung, pancreas, testis, ovary and skeletal muscle (at protein level).

It localises to the endoplasmic reticulum membrane. The enzyme catalyses an N-acylsphing-4-enine + 2 Fe(II)-[cytochrome b5] + O2 + 2 H(+) = an N-acyl-sphinga-4E,14Z-dienine + 2 Fe(III)-[cytochrome b5] + 2 H2O. It catalyses the reaction N-(hexanoyl)sphing-4-enine + 2 Fe(II)-[cytochrome b5] + O2 + 2 H(+) = N-hexanoyl-sphinga-4E,14Z-dienine + 2 Fe(III)-[cytochrome b5] + 2 H2O. The catalysed reaction is sphing-4-enine + 2 Fe(II)-[cytochrome b5] + O2 + 2 H(+) = sphinga-4E,14Z-dienine + 2 Fe(III)-[cytochrome b5] + 2 H2O. It carries out the reaction (11E)-octadecenoyl-CoA + 2 Fe(II)-[cytochrome b5] + O2 + 2 H(+) = (11E,13Z)-octadecadienoyl-CoA + 2 Fe(III)-[cytochrome b5] + 2 H2O. The enzyme catalyses N-acyl-1-deoxysphinganine + 2 Fe(II)-[cytochrome b5] + O2 + 2 H(+) = N-acyl-1-deoxysphing-14Z-enine + 2 Fe(III)-[cytochrome b5] + 2 H2O. It catalyses the reaction an N-acylsphinganine + 2 Fe(II)-[cytochrome b5] + O2 + 2 H(+) = an N-acylsphing-14Z-enine + 2 Fe(III)-[cytochrome b5] + 2 H2O. It participates in lipid metabolism; sphingolipid metabolism. The protein operates within lipid metabolism; polyunsaturated fatty acid biosynthesis. In terms of biological role, mammals have different sphingoid bases that differ in their length and/or pattern of desaturation and hydroxyl groups. The predominant sphingoid base that comprises mammalian ceramides is sphing-4-enine (sphingosine or SPH) which has a trans (E) desaturation at carbon 4. FADS3 is a desaturase that introduces a cis (Z) double bond between carbon 14 and carbon 15 of the sphingoid base (also known as long chain base, LCB), producing LCBs such as sphinga-4,14-dienine (SPD, d18:2(4E,14Z)) from SPH. Prefers SPH-containing ceramides (N-acylsphing-4-enines) as substrates. Capable of metabolizing also the SPH in its free form. SPD ceramides occur widely in mammalian tissues and cells. Due to their unusual structure containing a cis double bond, SPD ceramides may have an opposite, negative role in lipid microdomain formation relative to conventional ceramides. Could be involved in the detoxification of 1-deoxy sphingolipids, by desaturating the cytotoxic 1-deoxysphinganine (1-deoxySA, m18:0), produced under pathological conditions, to 1-deoxysphingenine (1-deoxysphingosine, 1-deoxySO, m18:1). Although prefers SPH-containing ceramides (N-acylsphing-4-enines) as substrates, it also exhibits activity toward dihydrosphingosine-containing CERs (N-acylsphinganines) and produces 14Z-SPH-containing sphingolipids,which can be found in patients with DEGS1 mutations. Its desaturase mechanism involves an electron transfer facilitated by cytochrome b5. FADS3 also acts as a methyl-end fatty acyl coenzyme A (CoA) desaturase that introduces a cis double bond between the preexisting double bond and the terminal methyl group of the fatty acyl chain. Desaturates (11E)-octadecenoate (trans-vaccenoate, the predominant trans fatty acid in human milk) at carbon 13 to generate (11E,13Z)-octadecadienoate (also known as conjugated linoleic acid 11E,13Z-CLA). The protein is Fatty acid desaturase 3 of Homo sapiens (Human).